A 279-amino-acid chain; its full sequence is MEGASRQSLAAARSVLDQVTAVPIGATAGTVAPEVRRIAGDLSAVATLVGGEPTVRRALTDPGAPPQSRTGLAARLLGGQISQGALAVVSAAVAGRWSRPADLRYALEELAVEATLAEAEAADALDEVEDELFRFGRILGQNPQLSLALTDPAAPTSAKVGLVTRLLSGRAHPVTLRLAEQAVADREQGDIERRLEQLSRIAAARRGRVVAVVRTATVLDADQIARLKAAISRFFGRQIQLQIDLDPAVLGGVAVRVGDEVVDGTVLRRLAAARRGLTR.

The protein belongs to the ATPase delta chain family. As to quaternary structure, F-type ATPases have 2 components, F(1) - the catalytic core - and F(0) - the membrane proton channel. F(1) has five subunits: alpha(3), beta(3), gamma(1), delta(1), epsilon(1). F(0) has three main subunits: a(1), b(2) and c(10-14). The alpha and beta chains form an alternating ring which encloses part of the gamma chain. F(1) is attached to F(0) by a central stalk formed by the gamma and epsilon chains, while a peripheral stalk is formed by the delta and b chains.

Its subcellular location is the cell membrane. In terms of biological role, f(1)F(0) ATP synthase produces ATP from ADP in the presence of a proton or sodium gradient. F-type ATPases consist of two structural domains, F(1) containing the extramembraneous catalytic core and F(0) containing the membrane proton channel, linked together by a central stalk and a peripheral stalk. During catalysis, ATP synthesis in the catalytic domain of F(1) is coupled via a rotary mechanism of the central stalk subunits to proton translocation. This protein is part of the stalk that links CF(0) to CF(1). It either transmits conformational changes from CF(0) to CF(1) or is implicated in proton conduction. The polypeptide is ATP synthase subunit delta (Parafrankia sp. (strain EAN1pec)).